Here is a 494-residue protein sequence, read N- to C-terminus: Glutamyl-tRNA(Gln) amidotransferase subunit A (494 aa).

Catalysis depends on charge relay system residues Lys-88 and Ser-163. Catalysis depends on Ser-187, which acts as the Acyl-ester intermediate.

This sequence belongs to the amidase family. GatA subfamily. Heterotrimer of A, B and C subunits.

It carries out the reaction L-glutamyl-tRNA(Gln) + L-glutamine + ATP + H2O = L-glutaminyl-tRNA(Gln) + L-glutamate + ADP + phosphate + H(+). Allows the formation of correctly charged Gln-tRNA(Gln) through the transamidation of misacylated Glu-tRNA(Gln) in organisms which lack glutaminyl-tRNA synthetase. The reaction takes place in the presence of glutamine and ATP through an activated gamma-phospho-Glu-tRNA(Gln). The sequence is that of Glutamyl-tRNA(Gln) amidotransferase subunit A from Corynebacterium diphtheriae (strain ATCC 700971 / NCTC 13129 / Biotype gravis).